Reading from the N-terminus, the 413-residue chain is Glucose-1-phosphate adenylyltransferase (413 aa).

Alpha-D-glucose 1-phosphate contacts are provided by residues Gly169, 184–185, and Ser201; that span reads EK.

It belongs to the bacterial/plant glucose-1-phosphate adenylyltransferase family. In terms of assembly, homotetramer.

The catalysed reaction is alpha-D-glucose 1-phosphate + ATP + H(+) = ADP-alpha-D-glucose + diphosphate. The protein operates within glycan biosynthesis; glycogen biosynthesis. In terms of biological role, involved in the biosynthesis of ADP-glucose, a building block required for the elongation reactions to produce glycogen. Catalyzes the reaction between ATP and alpha-D-glucose 1-phosphate (G1P) to produce pyrophosphate and ADP-Glc. This is Glucose-1-phosphate adenylyltransferase from Trichlorobacter lovleyi (strain ATCC BAA-1151 / DSM 17278 / SZ) (Geobacter lovleyi).